The following is a 427-amino-acid chain: Flotillin-1 (427 aa).

S19, S163, and S385 each carry phosphoserine. A Phosphothreonine modification is found at T387.

It belongs to the band 7/mec-2 family. Flotillin subfamily. As to quaternary structure, heterooligomeric complex of flotillin-1 and flotillin-2 and caveolin-1 and caveolin-2. Interacts with ECPAS.

The protein localises to the cell membrane. It is found in the endosome. The protein resides in the membrane. It localises to the caveola. Its subcellular location is the melanosome. The protein localises to the membrane raft. Functionally, may act as a scaffolding protein within caveolar membranes, functionally participating in formation of caveolae or caveolae-like vesicles. This is Flotillin-1 (FLOT1) from Sus scrofa (Pig).